A 534-amino-acid chain; its full sequence is Hypothemycin biosynthesis cluster protein hpm4 (534 aa).

Disordered stretches follow at residues I34–P61, L110–L130, and D236–I287. Composition is skewed to low complexity over residues S112 to P127 and T258 to T275.

Its pathway is secondary metabolite biosynthesis. Its function is as follows. Part of the gene cluster that mediates the biosynthesis of hypothemycin, a resorcylic acid lactone (RAL) that irreversibly inhibits a subset of protein kinases with a conserved cysteine in the ATP binding site such as human ERK2. The first step is performed by both PKSs hmp3 and hmp8 and leads to the production of 7',8'-dehydrozearalenol (DHZ). The highly reducing PKS hpm8 synthesizes the reduced hexaketide (7S,11S,2E,8E)-7,11-dihydroxy-dodeca-2,8-dienoate, which is transferred downstream to the non-reducing PKS hpm3. Hpm3 then extends the reduced hexaketide to a nonaketide, after which regioselective cyclization and macrolactonization affords DHZ. The next step is the conversion of DHZ into aigialomycin C and is performed by the O-methyltransferase hmp5, the FAD-binding monooxygenase hmp7, and the cytochrome P450 monooxygenase hmp1. The wide substrate tolerance of the hmp5 and hmp7 implies that the reactions from DHZ to aigialomycin C can occur in any order. The steps from aigialomycin C to hypothemycin are less well established. The FAD-linked oxidoreductase hmp9 presumably catalyzes oxidation of the C-6' hydroxyl to a ketone. The timing of this oxidation is important, since the resulting enone functional group is a Michael acceptor that can react spontaneously with glutathione, an abundant metabolite in fungal cells. The glutathione S-transferase hmp2 catalyzes cis-trans isomerization of the 7',8' double bond with equilibrium favoring the trans isomer. The hpm6-encoded transporter might preferentially pump hypothemycin out of the cell relative to the trans isomer aigialomycin A. The cis-to-trans isomerization may be coupled with C-4' hydroxylation, since all known hypothemycin analogs containing the enone functional group also have hydroxyl groups at both C-4' and C-5'. The sequence is that of Hypothemycin biosynthesis cluster protein hpm4 from Hypomyces subiculosus (Nectria subiculosa).